We begin with the raw amino-acid sequence, 461 residues long: Transcription factor phm6 (461 aa).

Positions 18–50 (CNRCRNHKLKCVVTEAPNGTACCQRCIRAMVPC) form a DNA-binding region, zn(2)-C6 fungal-type. 2 disordered regions span residues 55–79 (RERK…PWET) and 256–278 (LQTD…VGAT). Residues 256–274 (LQTDDSSSTQSESSRSRAS) show a composition bias toward low complexity.

The protein resides in the nucleus. In terms of biological role, transcription factor that regulates the expression of the gene cluster that mediates the biosynthesis of the trans-fused decalin-containing tetramic acid phomasetin. The chain is Transcription factor phm6 from Pyrenochaetopsis sp.